Reading from the N-terminus, the 88-residue chain is DNA-directed RNA polymerase subunit omega (88 aa).

Belongs to the RNA polymerase subunit omega family. The RNAP catalytic core consists of 2 alpha, 1 beta, 1 beta' and 1 omega subunit. When a sigma factor is associated with the core the holoenzyme is formed, which can initiate transcription.

The catalysed reaction is RNA(n) + a ribonucleoside 5'-triphosphate = RNA(n+1) + diphosphate. Its function is as follows. Promotes RNA polymerase assembly. Latches the N- and C-terminal regions of the beta' subunit thereby facilitating its interaction with the beta and alpha subunits. The sequence is that of DNA-directed RNA polymerase subunit omega from Salinispora arenicola (strain CNS-205).